Here is a 409-residue protein sequence, read N- to C-terminus: Multifunctional CCA protein (409 aa).

2 residues coordinate ATP: Gly-8 and Arg-11. CTP contacts are provided by Gly-8 and Arg-11. Residues Asp-21 and Asp-23 each coordinate Mg(2+). Residues Arg-91, Arg-137, and Arg-140 each contribute to the ATP site. Arg-91, Arg-137, and Arg-140 together coordinate CTP. Residues Thr-228–Trp-329 enclose the HD domain.

This sequence belongs to the tRNA nucleotidyltransferase/poly(A) polymerase family. Bacterial CCA-adding enzyme type 1 subfamily. As to quaternary structure, monomer. Can also form homodimers and oligomers. Mg(2+) serves as cofactor. Requires Ni(2+) as cofactor.

It catalyses the reaction a tRNA precursor + 2 CTP + ATP = a tRNA with a 3' CCA end + 3 diphosphate. It carries out the reaction a tRNA with a 3' CCA end + 2 CTP + ATP = a tRNA with a 3' CCACCA end + 3 diphosphate. In terms of biological role, catalyzes the addition and repair of the essential 3'-terminal CCA sequence in tRNAs without using a nucleic acid template. Adds these three nucleotides in the order of C, C, and A to the tRNA nucleotide-73, using CTP and ATP as substrates and producing inorganic pyrophosphate. tRNA 3'-terminal CCA addition is required both for tRNA processing and repair. Also involved in tRNA surveillance by mediating tandem CCA addition to generate a CCACCA at the 3' terminus of unstable tRNAs. While stable tRNAs receive only 3'-terminal CCA, unstable tRNAs are marked with CCACCA and rapidly degraded. This Psychromonas ingrahamii (strain DSM 17664 / CCUG 51855 / 37) protein is Multifunctional CCA protein.